The primary structure comprises 506 residues: Exoglucanase (506 aa).

The first 18 residues, 1–18 (MFPRSILLALSLTAVALG), serve as a signal peptide directing secretion. Residues 19-450 (QQVGTNMAEN…IKFGDINSTF (432 aa)) are catalytic. The active-site Nucleophile is E227. Residue E232 is the Proton donor of the active site. A glycan (N-linked (GlcNAc...) asparagine) is linked at N308. The tract at residues 405-426 (ASPSQPGISRGTCSRDSGKPED) is disordered. The segment covering 406 to 419 (SPSQPGISRGTCSR) has biased composition (polar residues). The N-linked (GlcNAc...) asparagine glycan is linked to N447. The interval 449–472 (TFNNNGGGGGNPSPTTTRPNSPAQ) is disordered. Positions 451 to 473 (NNNGGGGGNPSPTTTRPNSPAQT) are linker. Residues 460-470 (PSPTTTRPNSP) are compositionally biased toward low complexity. Residues 470–506 (PAQTMWGQCGGQGWTGPTACQSPSTCHVINDFYSQCF) enclose the CBM1 domain. 2 disulfide bridges follow: C478-C495 and C489-C505.

It belongs to the glycosyl hydrolase 7 (cellulase C) family.

It catalyses the reaction Hydrolysis of (1-&gt;4)-beta-D-glucosidic linkages in cellulose and cellotetraose, releasing cellobiose from the non-reducing ends of the chains.. The biological conversion of cellulose to glucose generally requires three types of hydrolytic enzymes: (1) Endoglucanases which cut internal beta-1,4-glucosidic bonds; (2) Exocellobiohydrolases that cut the disaccharide cellobiose from the non-reducing end of the cellulose polymer chain; (3) Beta-1,4-glucosidases which hydrolyze the cellobiose and other short cello-oligosaccharides to glucose. In Agaricus bisporus (White button mushroom), this protein is Exoglucanase (cel2).